A 426-amino-acid chain; its full sequence is Serine--tRNA ligase (426 aa).

A disordered region spans residues Lys36–Glu66. The span at Asp46–Ser55 shows a compositional bias: polar residues. An L-serine-binding site is contributed by Thr233–Glu235. Arg264–Glu266 is an ATP binding site. Glu287 is an L-serine binding site. Glu351 to Ser354 lines the ATP pocket. Ser387 is a binding site for L-serine.

This sequence belongs to the class-II aminoacyl-tRNA synthetase family. Type-1 seryl-tRNA synthetase subfamily. In terms of assembly, homodimer. The tRNA molecule binds across the dimer.

The protein localises to the cytoplasm. It catalyses the reaction tRNA(Ser) + L-serine + ATP = L-seryl-tRNA(Ser) + AMP + diphosphate + H(+). The enzyme catalyses tRNA(Sec) + L-serine + ATP = L-seryl-tRNA(Sec) + AMP + diphosphate + H(+). The protein operates within aminoacyl-tRNA biosynthesis; selenocysteinyl-tRNA(Sec) biosynthesis; L-seryl-tRNA(Sec) from L-serine and tRNA(Sec): step 1/1. Functionally, catalyzes the attachment of serine to tRNA(Ser). Is also able to aminoacylate tRNA(Sec) with serine, to form the misacylated tRNA L-seryl-tRNA(Sec), which will be further converted into selenocysteinyl-tRNA(Sec). The sequence is that of Serine--tRNA ligase from Francisella tularensis subsp. tularensis (strain FSC 198).